The primary structure comprises 97 residues: uncharacterized protein (97 aa).

In terms of biological role, may have a regulatory function. This is an uncharacterized protein from Synechocystis sp. (strain ATCC 27184 / PCC 6803 / Kazusa).